Consider the following 262-residue polypeptide: Hydroxyethylthiazole kinase (262 aa).

Residue Met-50 coordinates substrate. Positions 125 and 171 each coordinate ATP. Residue Gly-198 coordinates substrate.

The protein belongs to the Thz kinase family. Mg(2+) is required as a cofactor.

The catalysed reaction is 5-(2-hydroxyethyl)-4-methylthiazole + ATP = 4-methyl-5-(2-phosphooxyethyl)-thiazole + ADP + H(+). It functions in the pathway cofactor biosynthesis; thiamine diphosphate biosynthesis; 4-methyl-5-(2-phosphoethyl)-thiazole from 5-(2-hydroxyethyl)-4-methylthiazole: step 1/1. Functionally, catalyzes the phosphorylation of the hydroxyl group of 4-methyl-5-beta-hydroxyethylthiazole (THZ). This is Hydroxyethylthiazole kinase from Escherichia coli O139:H28 (strain E24377A / ETEC).